The chain runs to 208 residues: Uracil phosphoribosyltransferase (208 aa).

Residues Arg-78, Arg-103, and 130–138 (DPMLAIGGS) contribute to the 5-phospho-alpha-D-ribose 1-diphosphate site. Residues Ile-193 and 198–200 (GDA) contribute to the uracil site. Asp-199 is a binding site for 5-phospho-alpha-D-ribose 1-diphosphate.

The protein belongs to the UPRTase family. The cofactor is Mg(2+).

It carries out the reaction UMP + diphosphate = 5-phospho-alpha-D-ribose 1-diphosphate + uracil. It participates in pyrimidine metabolism; UMP biosynthesis via salvage pathway; UMP from uracil: step 1/1. Its activity is regulated as follows. Allosterically activated by GTP. In terms of biological role, catalyzes the conversion of uracil and 5-phospho-alpha-D-ribose 1-diphosphate (PRPP) to UMP and diphosphate. The chain is Uracil phosphoribosyltransferase from Vibrio cholerae serotype O1 (strain ATCC 39315 / El Tor Inaba N16961).